Consider the following 175-residue polypeptide: uncharacterized protein (175 aa).

A disordered region spans residues 113-175 (AQLPRDSRGN…RTRSGGLERL (63 aa)).

This is an uncharacterized protein from Bos taurus (Bovine).